The chain runs to 129 residues: Large ribosomal subunit protein bL17 (129 aa).

This sequence belongs to the bacterial ribosomal protein bL17 family. As to quaternary structure, part of the 50S ribosomal subunit. Contacts protein L32.

The sequence is that of Large ribosomal subunit protein bL17 from Serratia proteamaculans (strain 568).